The primary structure comprises 327 residues: GrpE protein homolog 2, mitochondrial (327 aa).

The N-terminal 39 residues, 1 to 39 (MLVLRILSRVTRNAGIRSSLSAVTLPARNQTPVFSSRFH), are a transit peptide targeting the mitochondrion. A disordered region spans residues 68-140 (SSSTSPESDE…DSESDDDELS (73 aa)). Composition is skewed to basic and acidic residues over residues 75–93 (SDEK…EKPT) and 103–113 (SESKDSVTDSA). The span at 130-140 (SDSESDDDELS) shows a compositional bias: acidic residues.

The protein belongs to the GrpE family. In terms of assembly, probable component of the PAM complex, at least composed of SSC1 (mtHsp70), MGE1, TIM44, PAM16/TIM16, PAM17 and PAM18/TIM14. Interacts with SSQ1.

It localises to the mitochondrion matrix. Essential component of the PAM complex, a complex required for the translocation of transit peptide-containing proteins from the inner membrane into the mitochondrial matrix in an ATP-dependent manner. Seems to control the nucleotide-dependent binding of mitochondrial HSP70 to substrate proteins. Binds ATP. Interacts with copper ions Cu(2+). Confers thermotolerance to long-term exposure at moderately high temperature (TMHT at 35 degrees Celsius). In Arabidopsis thaliana (Mouse-ear cress), this protein is GrpE protein homolog 2, mitochondrial.